A 231-amino-acid polypeptide reads, in one-letter code: Biosynthetic peptidoglycan transglycosylase (231 aa).

A helical membrane pass occupies residues alanine 12–proline 34.

It belongs to the glycosyltransferase 51 family.

It is found in the cell inner membrane. It carries out the reaction [GlcNAc-(1-&gt;4)-Mur2Ac(oyl-L-Ala-gamma-D-Glu-L-Lys-D-Ala-D-Ala)](n)-di-trans,octa-cis-undecaprenyl diphosphate + beta-D-GlcNAc-(1-&gt;4)-Mur2Ac(oyl-L-Ala-gamma-D-Glu-L-Lys-D-Ala-D-Ala)-di-trans,octa-cis-undecaprenyl diphosphate = [GlcNAc-(1-&gt;4)-Mur2Ac(oyl-L-Ala-gamma-D-Glu-L-Lys-D-Ala-D-Ala)](n+1)-di-trans,octa-cis-undecaprenyl diphosphate + di-trans,octa-cis-undecaprenyl diphosphate + H(+). It participates in cell wall biogenesis; peptidoglycan biosynthesis. In terms of biological role, peptidoglycan polymerase that catalyzes glycan chain elongation from lipid-linked precursors. This is Biosynthetic peptidoglycan transglycosylase from Rhodospirillum centenum (strain ATCC 51521 / SW).